A 192-amino-acid polypeptide reads, in one-letter code: Fe/S biogenesis protein NfuA (192 aa).

[4Fe-4S] cluster contacts are provided by C149 and C152.

It belongs to the NfuA family. Homodimer. It depends on [4Fe-4S] cluster as a cofactor.

Functionally, involved in iron-sulfur cluster biogenesis. Binds a 4Fe-4S cluster, can transfer this cluster to apoproteins, and thereby intervenes in the maturation of Fe/S proteins. Could also act as a scaffold/chaperone for damaged Fe/S proteins. The chain is Fe/S biogenesis protein NfuA from Shewanella baltica (strain OS223).